A 485-amino-acid polypeptide reads, in one-letter code: Signal recognition particle protein (485 aa).

Residues 107–114 (GLQGAGKT), 189–193 (DTAGR), and 247–250 (TKLD) contribute to the GTP site. The tract at residues 452–485 (GFGGGAPAPQPGFRGYGPPKKQKKGSKKKKGFGL) is disordered. Over residues 471-485 (KKQKKGSKKKKGFGL) the composition is skewed to basic residues.

It belongs to the GTP-binding SRP family. SRP54 subfamily. As to quaternary structure, part of the signal recognition particle protein translocation system, which is composed of SRP and FtsY.

It localises to the cytoplasm. The enzyme catalyses GTP + H2O = GDP + phosphate + H(+). Its function is as follows. Involved in targeting and insertion of nascent membrane proteins into the cytoplasmic membrane. Binds to the hydrophobic signal sequence of the ribosome-nascent chain (RNC) as it emerges from the ribosomes. The SRP-RNC complex is then targeted to the cytoplasmic membrane where it interacts with the SRP receptor FtsY. This chain is Signal recognition particle protein, found in Synechococcus elongatus (strain ATCC 33912 / PCC 7942 / FACHB-805) (Anacystis nidulans R2).